The chain runs to 258 residues: Homeobox-leucine zipper protein ATHB-7 (258 aa).

The homeobox DNA-binding region spans 29–88 (NKNNQRRFSDEQIKSLEMMFESETRLEPRKKVQLARELGLQPRQVAIWFQNKRARWKSKQ). The leucine-zipper stretch occupies residues 89–124 (LETEYNILRQNYDNLASQFESLKKEKQALVSELQRL). The tract at residues 149-183 (SSTHHESENEENRRRKPEEVRPEMEMKDDKGHHGV) is disordered. Over residues 151–183 (THHESENEENRRRKPEEVRPEMEMKDDKGHHGV) the composition is skewed to basic and acidic residues.

The protein belongs to the HD-ZIP homeobox family. Class I subfamily. Interacts with TBP2 and TFIIB1. As to expression, widely expressed.

Its subcellular location is the nucleus. Functionally, probable transcription activator that may act as growth regulators in response to water deficit. This chain is Homeobox-leucine zipper protein ATHB-7 (ATHB-7), found in Arabidopsis thaliana (Mouse-ear cress).